Here is a 316-residue protein sequence, read N- to C-terminus: Ribose-phosphate pyrophosphokinase (316 aa).

ATP-binding positions include 40–42 and 99–100; these read DGE and RQ. 2 residues coordinate Mg(2+): histidine 133 and aspartate 174. Lysine 197 is an active-site residue. Residues arginine 199, aspartate 223, and 227-231 contribute to the D-ribose 5-phosphate site; that span reads DTAGT.

The protein belongs to the ribose-phosphate pyrophosphokinase family. Class I subfamily. In terms of assembly, homohexamer. Mg(2+) serves as cofactor.

It is found in the cytoplasm. The enzyme catalyses D-ribose 5-phosphate + ATP = 5-phospho-alpha-D-ribose 1-diphosphate + AMP + H(+). Its pathway is metabolic intermediate biosynthesis; 5-phospho-alpha-D-ribose 1-diphosphate biosynthesis; 5-phospho-alpha-D-ribose 1-diphosphate from D-ribose 5-phosphate (route I): step 1/1. Its function is as follows. Involved in the biosynthesis of the central metabolite phospho-alpha-D-ribosyl-1-pyrophosphate (PRPP) via the transfer of pyrophosphoryl group from ATP to 1-hydroxyl of ribose-5-phosphate (Rib-5-P). The protein is Ribose-phosphate pyrophosphokinase of Fusobacterium nucleatum subsp. nucleatum (strain ATCC 25586 / DSM 15643 / BCRC 10681 / CIP 101130 / JCM 8532 / KCTC 2640 / LMG 13131 / VPI 4355).